The sequence spans 316 residues: 4-hydroxy-3-methylbut-2-enyl diphosphate reductase (316 aa).

Cys-12 lines the [4Fe-4S] cluster pocket. Positions 41 and 74 each coordinate (2E)-4-hydroxy-3-methylbut-2-enyl diphosphate. The dimethylallyl diphosphate site is built by His-41 and His-74. Residues His-41 and His-74 each contribute to the isopentenyl diphosphate site. Cys-96 contributes to the [4Fe-4S] cluster binding site. Residue His-124 participates in (2E)-4-hydroxy-3-methylbut-2-enyl diphosphate binding. Dimethylallyl diphosphate is bound at residue His-124. Position 124 (His-124) interacts with isopentenyl diphosphate. Glu-126 (proton donor) is an active-site residue. Thr-167 contributes to the (2E)-4-hydroxy-3-methylbut-2-enyl diphosphate binding site. Residue Cys-197 participates in [4Fe-4S] cluster binding. (2E)-4-hydroxy-3-methylbut-2-enyl diphosphate contacts are provided by Ser-225, Ser-226, Asn-227, and Ser-269. Residues Ser-225, Ser-226, Asn-227, and Ser-269 each contribute to the dimethylallyl diphosphate site. Residues Ser-225, Ser-226, Asn-227, and Ser-269 each contribute to the isopentenyl diphosphate site.

Belongs to the IspH family. In terms of assembly, homodimer. [4Fe-4S] cluster is required as a cofactor.

It carries out the reaction isopentenyl diphosphate + 2 oxidized [2Fe-2S]-[ferredoxin] + H2O = (2E)-4-hydroxy-3-methylbut-2-enyl diphosphate + 2 reduced [2Fe-2S]-[ferredoxin] + 2 H(+). It catalyses the reaction dimethylallyl diphosphate + 2 oxidized [2Fe-2S]-[ferredoxin] + H2O = (2E)-4-hydroxy-3-methylbut-2-enyl diphosphate + 2 reduced [2Fe-2S]-[ferredoxin] + 2 H(+). The protein operates within isoprenoid biosynthesis; dimethylallyl diphosphate biosynthesis; dimethylallyl diphosphate from (2E)-4-hydroxy-3-methylbutenyl diphosphate: step 1/1. It functions in the pathway isoprenoid biosynthesis; isopentenyl diphosphate biosynthesis via DXP pathway; isopentenyl diphosphate from 1-deoxy-D-xylulose 5-phosphate: step 6/6. In terms of biological role, catalyzes the conversion of 1-hydroxy-2-methyl-2-(E)-butenyl 4-diphosphate (HMBPP) into a mixture of isopentenyl diphosphate (IPP) and dimethylallyl diphosphate (DMAPP). Acts in the terminal step of the DOXP/MEP pathway for isoprenoid precursor biosynthesis. The sequence is that of 4-hydroxy-3-methylbut-2-enyl diphosphate reductase from Enterobacter sp. (strain 638).